Here is a 144-residue protein sequence, read N- to C-terminus: 3-dehydroquinate dehydratase (144 aa).

The Proton acceptor role is filled by tyrosine 24. Residues asparagine 76, histidine 82, and aspartate 89 each contribute to the substrate site. The active-site Proton donor is histidine 102. Substrate contacts are provided by residues 103–104 (LS) and arginine 113.

Belongs to the type-II 3-dehydroquinase family. As to quaternary structure, homododecamer.

It catalyses the reaction 3-dehydroquinate = 3-dehydroshikimate + H2O. The protein operates within metabolic intermediate biosynthesis; chorismate biosynthesis; chorismate from D-erythrose 4-phosphate and phosphoenolpyruvate: step 3/7. Catalyzes a trans-dehydration via an enolate intermediate. In Bordetella avium (strain 197N), this protein is 3-dehydroquinate dehydratase.